The chain runs to 594 residues: Arginine--tRNA ligase (594 aa).

Residues 139-149 (ANPTGPLHVGH) carry the 'HIGH' region motif.

This sequence belongs to the class-I aminoacyl-tRNA synthetase family. In terms of assembly, monomer.

The protein localises to the cytoplasm. It catalyses the reaction tRNA(Arg) + L-arginine + ATP = L-arginyl-tRNA(Arg) + AMP + diphosphate. In Paraburkholderia phymatum (strain DSM 17167 / CIP 108236 / LMG 21445 / STM815) (Burkholderia phymatum), this protein is Arginine--tRNA ligase.